The following is a 150-amino-acid chain: UPF0102 protein sll0189 (150 aa).

Belongs to the UPF0102 family.

The polypeptide is UPF0102 protein sll0189 (Synechocystis sp. (strain ATCC 27184 / PCC 6803 / Kazusa)).